The chain runs to 556 residues: Arginine--tRNA ligase (556 aa).

The short motif at 132–142 (ANPTGDLHLGH) is the 'HIGH' region element.

The protein belongs to the class-I aminoacyl-tRNA synthetase family. As to quaternary structure, monomer.

The protein resides in the cytoplasm. It carries out the reaction tRNA(Arg) + L-arginine + ATP = L-arginyl-tRNA(Arg) + AMP + diphosphate. The protein is Arginine--tRNA ligase of Listeria monocytogenes serovar 1/2a (strain ATCC BAA-679 / EGD-e).